We begin with the raw amino-acid sequence, 106 residues long: Large ribosomal subunit protein uL24 (106 aa).

Belongs to the universal ribosomal protein uL24 family. As to quaternary structure, part of the 50S ribosomal subunit.

In terms of biological role, one of two assembly initiator proteins, it binds directly to the 5'-end of the 23S rRNA, where it nucleates assembly of the 50S subunit. Functionally, one of the proteins that surrounds the polypeptide exit tunnel on the outside of the subunit. In Laribacter hongkongensis (strain HLHK9), this protein is Large ribosomal subunit protein uL24.